Consider the following 249-residue polypeptide: Probable transcriptional regulatory protein Sfum_0996 (249 aa).

This sequence belongs to the TACO1 family.

The protein localises to the cytoplasm. The protein is Probable transcriptional regulatory protein Sfum_0996 of Syntrophobacter fumaroxidans (strain DSM 10017 / MPOB).